A 316-amino-acid polypeptide reads, in one-letter code: 4-hydroxyphenylacetate decarboxylase activating enzyme (316 aa).

A Radical SAM core domain is found at 20 to 307; it reads HDGPGCRTTV…QDIFLDNGIA (288 aa). [4Fe-4S] cluster is bound by residues cysteine 34, cysteine 38, cysteine 41, cysteine 60, cysteine 66, cysteine 69, and cysteine 105. 40 to 42 serves as a coordination point for S-adenosyl-L-methionine; it reads WCA. The region spanning 84-115 is the 4Fe-4S ferredoxin-type domain; that stretch reads NKPVIDWNICKDCESFECVNSCYYNAFKLCAK. S-adenosyl-L-methionine is bound by residues glycine 144, 193-195, and histidine 267; that span reads DIK.

It belongs to the organic radical-activating enzymes family. Monomer. It depends on [4Fe-4S] cluster as a cofactor.

The catalysed reaction is glycyl-[protein] + reduced [flavodoxin] + S-adenosyl-L-methionine = glycin-2-yl radical-[protein] + semiquinone [flavodoxin] + 5'-deoxyadenosine + L-methionine + H(+). Functionally, catalyzes activation of 4-hydroxyphenylacetate decarboxylase under anaerobic conditions by generation of an organic free radical on a glycine residue, via a homolytic cleavage of S-adenosyl-L-methionine (SAM). The protein is 4-hydroxyphenylacetate decarboxylase activating enzyme of Clostridioides difficile (strain 630) (Peptoclostridium difficile).